The sequence spans 1676 residues: Protein TIC 214 (1676 aa).

6 helical membrane-spanning segments follow: residues Ala23–Pro43, Gly71–Ile91, Leu96–Phe116, Ala145–Met165, Val179–Leu199, and Ile226–Phe246.

Belongs to the TIC214 family. As to quaternary structure, part of the Tic complex.

It is found in the plastid. It localises to the chloroplast inner membrane. Involved in protein precursor import into chloroplasts. May be part of an intermediate translocation complex acting as a protein-conducting channel at the inner envelope. In Zygnema circumcarinatum (Green alga), this protein is Protein TIC 214.